We begin with the raw amino-acid sequence, 421 residues long: Medium-chain specific acyl-CoA dehydrogenase, mitochondrial (421 aa).

A mitochondrion-targeting transit peptide spans 1 to 25 (MAAGFGRCCRVLRSISRFHWRSQHT). K69 is subject to N6-acetyllysine; alternate. K69 carries the post-translational modification N6-succinyllysine; alternate. 158 to 167 (YCVTEPGAGS) serves as a coordination point for FAD. S167 is an octanoyl-CoA binding site. Position 179 is an N6-succinyllysine (K179). Position 191-193 (191-193 (WIT)) interacts with FAD. Residues K212, K217, K259, and K271 each carry the N6-acetyllysine; alternate modification. N6-succinyllysine; alternate occurs at positions 212, 217, 259, and 271. D278 lines the octanoyl-CoA pocket. Position 279 is an N6-acetyllysine (K279). R281 lines the octanoyl-CoA pocket. At K301 the chain carries N6-acetyllysine. Residues 306 to 308 (RKT) and 316 to 317 (HQ) contribute to the FAD site. A Phosphothreonine modification is found at T351. FAD-binding positions include 374–378 (QILGG) and 401–405 (EGTSQ). E401 serves as a coordination point for octanoyl-CoA. E401 functions as the Proton acceptor in the catalytic mechanism.

Belongs to the acyl-CoA dehydrogenase family. In terms of assembly, homotetramer. Interacts with the heterodimeric electron transfer flavoprotein ETF. It depends on FAD as a cofactor. Post-translationally, acetylated. Could occur at proximity of the cofactor-binding sites and reduce the catalytic activity. Could be deacetylated by SIRT3.

Its subcellular location is the mitochondrion matrix. It catalyses the reaction a medium-chain 2,3-saturated fatty acyl-CoA + oxidized [electron-transfer flavoprotein] + H(+) = a medium-chain (2E)-enoyl-CoA + reduced [electron-transfer flavoprotein]. The catalysed reaction is pentanoyl-CoA + oxidized [electron-transfer flavoprotein] + H(+) = (2E)-pentenoyl-CoA + reduced [electron-transfer flavoprotein]. The enzyme catalyses hexanoyl-CoA + oxidized [electron-transfer flavoprotein] + H(+) = (2E)-hexenoyl-CoA + reduced [electron-transfer flavoprotein]. It carries out the reaction octanoyl-CoA + oxidized [electron-transfer flavoprotein] + H(+) = (2E)-octenoyl-CoA + reduced [electron-transfer flavoprotein]. It catalyses the reaction decanoyl-CoA + oxidized [electron-transfer flavoprotein] + H(+) = (2E)-decenoyl-CoA + reduced [electron-transfer flavoprotein]. The catalysed reaction is dodecanoyl-CoA + oxidized [electron-transfer flavoprotein] + H(+) = (2E)-dodecenoyl-CoA + reduced [electron-transfer flavoprotein]. The enzyme catalyses tetradecanoyl-CoA + oxidized [electron-transfer flavoprotein] + H(+) = (2E)-tetradecenoyl-CoA + reduced [electron-transfer flavoprotein]. It carries out the reaction oxidized [electron-transfer flavoprotein] + hexadecanoyl-CoA + H(+) = (2E)-hexadecenoyl-CoA + reduced [electron-transfer flavoprotein]. It functions in the pathway lipid metabolism; mitochondrial fatty acid beta-oxidation. Its function is as follows. Medium-chain specific acyl-CoA dehydrogenase is one of the acyl-CoA dehydrogenases that catalyze the first step of mitochondrial fatty acid beta-oxidation, an aerobic process breaking down fatty acids into acetyl-CoA and allowing the production of energy from fats. The first step of fatty acid beta-oxidation consists in the removal of one hydrogen from C-2 and C-3 of the straight-chain fatty acyl-CoA thioester, resulting in the formation of trans-2-enoyl-CoA. Electron transfer flavoprotein (ETF) is the electron acceptor that transfers electrons to the main mitochondrial respiratory chain via ETF-ubiquinone oxidoreductase (ETF dehydrogenase). Among the different mitochondrial acyl-CoA dehydrogenases, medium-chain specific acyl-CoA dehydrogenase acts specifically on acyl-CoAs with saturated 6 to 12 carbons long primary chains. This Homo sapiens (Human) protein is Medium-chain specific acyl-CoA dehydrogenase, mitochondrial.